Consider the following 352-residue polypeptide: MNIENLIKGINGLDNKVMSKIQKRLDNLTKPLGSLGTLEDIVKQLGGITGEVYPSVKNKTVIIMCADNGIVEENVSSCPKSVTASVTRNFMKGFTGINVFTRHAGADIEVIDIGVDADINEEGIINKKIRRGTSNMIKGAAMTRDEALKGLEVGIEAVKELKDKGVNLIGTGEMGVGNTTTSSAVASVLTGCPVDEMVGIGSGLTKEAFRNKIQIVKEAIALNKPNKEDPIDVLSKVGGFDIAGLAGCFLGAAIYRIPIVIDGFISASAALLAVKINPLVKNFIIPSHGSAEPGSKWIMKELDLEPMLNLKMRLGEGTGAALAFQIVDMAVFSYLEMGTFENAEIEPYKPLK.

Residue Glu-316 is the Proton acceptor of the active site.

Belongs to the CobT family.

The catalysed reaction is 5,6-dimethylbenzimidazole + nicotinate beta-D-ribonucleotide = alpha-ribazole 5'-phosphate + nicotinate + H(+). The protein operates within nucleoside biosynthesis; alpha-ribazole biosynthesis; alpha-ribazole from 5,6-dimethylbenzimidazole: step 1/2. In terms of biological role, catalyzes the synthesis of alpha-ribazole-5'-phosphate from nicotinate mononucleotide (NAMN) and 5,6-dimethylbenzimidazole (DMB). The polypeptide is Nicotinate-nucleotide--dimethylbenzimidazole phosphoribosyltransferase (Clostridium acetobutylicum (strain ATCC 824 / DSM 792 / JCM 1419 / IAM 19013 / LMG 5710 / NBRC 13948 / NRRL B-527 / VKM B-1787 / 2291 / W)).